The primary structure comprises 482 residues: Serine carboxypeptidase-like 26 (482 aa).

The signal sequence occupies residues 1–28 (MAVAAAAAARRRDVSCLLLLLCFSSSMA). 3 disulfide bridges follow: Cys-101–Cys-366, Cys-263–Cys-274, and Cys-298–Cys-333. An N-linked (GlcNAc...) asparagine glycan is attached at Asn-152. The active site involves Ser-194. Residues Asn-269, Asn-301, Asn-354, and Asn-375 are each glycosylated (N-linked (GlcNAc...) asparagine). Active-site residues include Asp-403 and His-455.

Belongs to the peptidase S10 family.

The protein localises to the secreted. Its function is as follows. Acts as a positive regulator of grain size by controlling grain width, filling and weight. High expression of GS5 in the grain is correlated with large grain size. The polypeptide is Serine carboxypeptidase-like 26 (Oryza sativa subsp. japonica (Rice)).